The sequence spans 422 residues: Proton-gated ion channel subunit pbo-6 (422 aa).

Positions 1–20 (MQCSFLTIFIFITTVTVGVA) are cleaved as a signal peptide. Residues 21–233 (EFSEQYQGSS…IKVARKPFYY (213 aa)) lie on the Extracellular side of the membrane. Cys151 and Cys165 are joined by a disulfide. 3 helical membrane-spanning segments follow: residues 234-254 (LISL…GLFA), 268-288 (LGVT…EKVP), and 294-314 (VPLL…ATIL). At 315–378 (TSTVMRVHAK…GEVSRRMDYL (64 aa)) the chain is on the cytoplasmic side. The chain crosses the membrane as a helical span at residues 379–399 (LASVFIIIISTPTLYLFYMCF).

It belongs to the ligand-gated ion channel (TC 1.A.9) family. Acetylcholine receptor (TC 1.A.9.1) subfamily. As to quaternary structure, the functional channel is a hetero-oligomer of pbo-5 and pbo-6. Expressed in the posterior body muscles.

The protein resides in the membrane. In terms of biological role, forms a proton-gated ion channel with pbo-5 that is activated by acidification of the posterior coelomic space, leading to posterior body wall muscle contraction (pBoc) during the defecation cycle. Not necessary for stimulation of posterior body contraction (pBoc). Does not bind neurotransmitters such as acetylcholine, gamma-aminobutyric acid, glycine, serotonin, glutamate or choline. The sequence is that of Proton-gated ion channel subunit pbo-6 from Caenorhabditis elegans.